A 77-amino-acid chain; its full sequence is Acyl carrier protein (77 aa).

Residues 2-77 (SNIEERVKKI…AAIDYVNSAQ (76 aa)) form the Carrier domain. Ser37 carries the O-(pantetheine 4'-phosphoryl)serine modification.

This sequence belongs to the acyl carrier protein (ACP) family. In terms of processing, 4'-phosphopantetheine is transferred from CoA to a specific serine of apo-ACP by AcpS. This modification is essential for activity because fatty acids are bound in thioester linkage to the sulfhydryl of the prosthetic group.

Its subcellular location is the cytoplasm. Its pathway is lipid metabolism; fatty acid biosynthesis. In terms of biological role, carrier of the growing fatty acid chain in fatty acid biosynthesis. The protein is Acyl carrier protein of Vibrio campbellii (strain ATCC BAA-1116).